The primary structure comprises 206 residues: Small ribosomal subunit protein uS4 (206 aa).

The 62-residue stretch at 96–157 (QRLDNVVYRM…KAKKQARIGA (62 aa)) folds into the S4 RNA-binding domain.

Belongs to the universal ribosomal protein uS4 family. Part of the 30S ribosomal subunit. Contacts protein S5. The interaction surface between S4 and S5 is involved in control of translational fidelity.

In terms of biological role, one of the primary rRNA binding proteins, it binds directly to 16S rRNA where it nucleates assembly of the body of the 30S subunit. Functionally, with S5 and S12 plays an important role in translational accuracy. The protein is Small ribosomal subunit protein uS4 of Idiomarina loihiensis (strain ATCC BAA-735 / DSM 15497 / L2-TR).